Here is a 66-residue protein sequence, read N- to C-terminus: Small ribosomal subunit protein bS21 (66 aa).

Belongs to the bacterial ribosomal protein bS21 family.

The chain is Small ribosomal subunit protein bS21 from Rickettsia akari (strain Hartford).